The primary structure comprises 213 residues: Heat shock protein 30C (213 aa).

Residues 61–80 show a composition bias toward basic and acidic residues; sequence SKDTEMRRITDQNRQSRESE. 2 disordered regions span residues 61-93 and 174-213; these read SKDT…GKDH and ALPP…QKVD. The region spanning 76–188 is the sHSP domain; the sequence is SRESEGTSPN…PETPIPISMD (113 aa).

The protein belongs to the small heat shock protein (HSP20) family.

The sequence is that of Heat shock protein 30C (hsp30c) from Xenopus laevis (African clawed frog).